The following is a 394-amino-acid chain: Ornithine aminotransferase 1 (394 aa).

An N6-(pyridoxal phosphate)lysine modification is found at lysine 252.

Belongs to the class-III pyridoxal-phosphate-dependent aminotransferase family. OAT subfamily. Pyridoxal 5'-phosphate is required as a cofactor.

It is found in the cytoplasm. The enzyme catalyses a 2-oxocarboxylate + L-ornithine = L-glutamate 5-semialdehyde + an L-alpha-amino acid. Its pathway is amino-acid biosynthesis; L-proline biosynthesis; L-glutamate 5-semialdehyde from L-ornithine: step 1/1. In terms of biological role, catalyzes the interconversion of ornithine to glutamate semialdehyde. This chain is Ornithine aminotransferase 1, found in Staphylococcus saprophyticus subsp. saprophyticus (strain ATCC 15305 / DSM 20229 / NCIMB 8711 / NCTC 7292 / S-41).